The following is a 683-amino-acid chain: DNA ligase 2 (683 aa).

Residues 27 to 31, 76 to 77, and Glu-106 each bind NAD(+); these read DGEFD and SL. Lys-108 acts as the N6-AMP-lysine intermediate in catalysis. NAD(+)-binding residues include Arg-129, Glu-169, Lys-285, and Lys-309. 4 residues coordinate Zn(2+): Cys-403, Cys-406, Cys-422, and Cys-428. Positions 592 to 681 constitute a BRCT domain; sequence SIERTLEGLS…PAAVAAEEPE (90 aa).

The protein belongs to the NAD-dependent DNA ligase family. LigA subfamily. Requires Mg(2+) as cofactor. Mn(2+) is required as a cofactor.

The catalysed reaction is NAD(+) + (deoxyribonucleotide)n-3'-hydroxyl + 5'-phospho-(deoxyribonucleotide)m = (deoxyribonucleotide)n+m + AMP + beta-nicotinamide D-nucleotide.. Functionally, DNA ligase that catalyzes the formation of phosphodiester linkages between 5'-phosphoryl and 3'-hydroxyl groups in double-stranded DNA using NAD as a coenzyme and as the energy source for the reaction. It is essential for DNA replication and repair of damaged DNA. This chain is DNA ligase 2, found in Nocardia farcinica (strain IFM 10152).